Consider the following 201-residue polypeptide: Large ribosomal subunit protein uL4 (201 aa).

Positions Gln46–Gly71 are disordered.

Belongs to the universal ribosomal protein uL4 family. Part of the 50S ribosomal subunit.

Functionally, one of the primary rRNA binding proteins, this protein initially binds near the 5'-end of the 23S rRNA. It is important during the early stages of 50S assembly. It makes multiple contacts with different domains of the 23S rRNA in the assembled 50S subunit and ribosome. In terms of biological role, forms part of the polypeptide exit tunnel. The chain is Large ribosomal subunit protein uL4 from Shewanella sediminis (strain HAW-EB3).